The primary structure comprises 124 residues: Small ribosomal subunit protein uS12c (124 aa).

Disordered stretches follow at residues 1 to 28 (MPTIQQLVRSERRKINKKTKSPALKSCP) and 104 to 124 (AAGVKDRRKSRSKYGTKKPKS). Composition is skewed to basic residues over residues 11–20 (ERRKINKKTK) and 109–124 (DRRKSRSKYGTKKPKS).

It belongs to the universal ribosomal protein uS12 family. As to quaternary structure, part of the 30S ribosomal subunit.

Its subcellular location is the plastid. It localises to the chloroplast. Its function is as follows. With S4 and S5 plays an important role in translational accuracy. Located at the interface of the 30S and 50S subunits. This chain is Small ribosomal subunit protein uS12c (rps12), found in Porphyra purpurea (Red seaweed).